The following is a 362-amino-acid chain: Anthranilate phosphoribosyltransferase 2 (362 aa).

5-phospho-alpha-D-ribose 1-diphosphate-binding positions include Gly-103, 106–107 (GD), Thr-111, 113–116 (NIST), 131–139 (KHGNRSASS), and Ser-143. Gly-103 provides a ligand contact to anthranilate. Ser-115 contacts Mg(2+). Anthranilate is bound at residue Asn-134. Residue Arg-189 coordinates anthranilate. Mg(2+)-binding residues include Asp-248 and Glu-249.

It belongs to the anthranilate phosphoribosyltransferase family. In terms of assembly, homodimer. The cofactor is Mg(2+).

The catalysed reaction is N-(5-phospho-beta-D-ribosyl)anthranilate + diphosphate = 5-phospho-alpha-D-ribose 1-diphosphate + anthranilate. It participates in amino-acid biosynthesis; L-tryptophan biosynthesis; L-tryptophan from chorismate: step 2/5. Functionally, catalyzes the transfer of the phosphoribosyl group of 5-phosphorylribose-1-pyrophosphate (PRPP) to anthranilate to yield N-(5'-phosphoribosyl)-anthranilate (PRA). This chain is Anthranilate phosphoribosyltransferase 2, found in Nostoc sp. (strain PCC 7120 / SAG 25.82 / UTEX 2576).